The sequence spans 3637 residues: Replicase polyprotein 1ab (3637 aa).

The C4-type; atypical zinc-finger motif lies at 8 to 28 (CLCTPNARVFWERGQVYCTRC). The Peptidase C31 domain occupies 69 to 181 (ECRPGGMCWL…KGLCPFADAR (113 aa)). Residues 69–183 (ECRPGGMCWL…LCPFADARAN (115 aa)) form a PCP1-alpha region. Active-site for Nsp1-alpha papain-like cysteine proteinase activity residues include C76 and H147. Residues 262-380 (RDTKFSKCWE…KFRFQTRKYY (119 aa)) form a PCP1-beta region. The Peptidase C32 domain maps to 262–381 (RDTKFSKCWE…FRFQTRKYYG (120 aa)). Catalysis depends on for Nsp1-beta papain-like cysteine proteinase activity residues C269 and H340. In terms of domain architecture, Peptidase C33 spans 381-486 (GYSPPGDGAC…RGVCGECEMG (106 aa)). Active-site for Nsp2 cysteine proteinase activity residues include C390 and H456. Disordered regions lie at residues 676–743 (CKPK…AALK) and 865–899 (QQKT…GVSL). Basic residues predominate over residues 678 to 689 (PKRKRSRKKKTR). Composition is skewed to basic and acidic residues over residues 714–727 (DTRE…KAEK) and 873–895 (GERE…KRDL). 7 consecutive transmembrane segments (helical) span residues 940-960 (WLNH…SFIF), 981-1001 (VLLC…CVFG), 1083-1103 (FYFL…AVAL), 1287-1307 (IADF…SAWL), 1362-1382 (ALMV…SLLV), 1390-1410 (CLLM…PFVL), and 1423-1443 (VQFF…VVLI). The interval 979-1103 (CCVLLCFYLP…LGLVFLAVAL (125 aa)) is HD1. The tract at residues 1287-1446 (IADFVCLGLY…ASVVVLISSW (160 aa)) is HD2. The 202-residue stretch at 1511–1712 (GSLRTRGCAK…AVVESLPALE (202 aa)) folds into the Peptidase S32 domain. Residues H1549, D1574, and S1626 each act as charge relay system; for 3C-like serine proteinase activity in the active site. Transmembrane regions (helical) follow at residues 1735 to 1755 (DVPV…VMLA), 1761 to 1781 (FALS…AVAF), 1801 to 1821 (LVIA…LGQL), 1824 to 1844 (CCLM…LYLG), and 1853 to 1873 (EIFF…SLFK). The segment at 1735–1872 (DVPVIRIAFF…MFLPLFLSLF (138 aa)) is HD3. The NiRAN domain occupies 2214 to 2372 (SLNGLQQASA…LPYKLHPVRG (159 aa)). Residues 2611–2745 (GRCLEADLAS…YDESSELPNY (135 aa)) form the RdRp catalytic domain. The AV ZBD domain occupies 2865 to 2928 (KKKCRTCAHC…SPVMSLNTEL (64 aa)). C2871, C2874, C2884, C2889, H2892, H2894, H2896, H2898, C2905, H2907, C2914, and C2917 together coordinate Zn(2+). One can recognise a (+)RNA virus helicase ATP-binding domain in the interval 2985 to 3137 (QVMKVAQTCA…AFALMLGRQL (153 aa)). Position 3013 to 3020 (3013 to 3020 (GAPGTGKT)) interacts with ATP. The (+)RNA virus helicase C-terminal domain maps to 3138 to 3269 (IEVFRFGPSI…CGEQPMMISE (132 aa)). The region spanning 3293–3389 (EGTASPLPQV…LTKFLKGKPV (97 aa)) is the AV-Nsp11N/CoV-Nsp15M domain. Residues 3391 to 3513 (LPDSLMSTGR…MVWKDATAYF (123 aa)) form the NendoU domain. Residues H3422, H3437, and K3466 contribute to the active site.

This sequence belongs to the arteriviridae polyprotein family. In terms of processing, specific enzymatic cleavages in vivo by its own proteases yield mature proteins. There are two alternative pathways for processing. Either nsp4-5 is cleaved, which represents the major pathway or the nsp5-6 and nsp6-7 are processed, which represents the minor pathway. The major pathway occurs when nsp2 acts as a cofactor for nsp4.

The protein resides in the host membrane. Its subcellular location is the host cytoplasm. It is found in the host perinuclear region. It carries out the reaction RNA(n) + a ribonucleoside 5'-triphosphate = RNA(n+1) + diphosphate. The enzyme catalyses ATP + H2O = ADP + phosphate + H(+). It catalyses the reaction uridylyl-uridylyl-ribonucleotide-RNA = a 3'-end uridylyl-2',3'-cyclophospho-uridine-RNA + a 5'-end dephospho-ribonucleoside-RNA. Its function is as follows. The replicase polyprotein 1ab is a multifunctional protein: it contains the activities necessary for the transcription of negative stranded RNA, leader RNA, subgenomic mRNAs and progeny virion RNA as well as proteinases responsible for the cleavage of the polyprotein into functional products. Functionally, the Nsp1 chain is essential for viral subgenomic mRNA synthesis. In terms of biological role, the 3C-like serine proteinase chain is responsible for the majority of cleavages as it cleaves the C-terminus of the polyprotein. The helicase chain, which contains a zinc finger structure, displays RNA and DNA duplex-unwinding activities with 5' to 3' polarity. Its function is as follows. Plays a role in viral transcription/replication and prevents the simultaneous activation of host cell dsRNA sensors, such as MDA5/IFIH1, OAS, and PKR. Acts by degrading the 5'-polyuridines generated during replication of the poly(A) region of viral genomic and subgenomic RNAs. Catalyzes a two-step reaction in which a 2'3'-cyclic phosphate (2'3'-cP) is first generated by 2'-O transesterification, which is then hydrolyzed to a 3'-phosphate (3'-P). If not degraded, poly(U) RNA would hybridize with poly(A) RNA tails and activate host dsRNA sensors. The polypeptide is Replicase polyprotein 1ab (rep) (Mus musculus domesticus (western European house mouse)).